The following is a 412-amino-acid chain: Serine hydroxymethyltransferase (412 aa).

(6S)-5,6,7,8-tetrahydrofolate contacts are provided by residues L120 and 124 to 126 (GHL). K229 bears the N6-(pyridoxal phosphate)lysine mark. A (6S)-5,6,7,8-tetrahydrofolate-binding site is contributed by 352–354 (SPF).

It belongs to the SHMT family. Homodimer. Pyridoxal 5'-phosphate serves as cofactor.

Its subcellular location is the cytoplasm. The enzyme catalyses (6R)-5,10-methylene-5,6,7,8-tetrahydrofolate + glycine + H2O = (6S)-5,6,7,8-tetrahydrofolate + L-serine. It participates in one-carbon metabolism; tetrahydrofolate interconversion. Its pathway is amino-acid biosynthesis; glycine biosynthesis; glycine from L-serine: step 1/1. Functionally, catalyzes the reversible interconversion of serine and glycine with tetrahydrofolate (THF) serving as the one-carbon carrier. This reaction serves as the major source of one-carbon groups required for the biosynthesis of purines, thymidylate, methionine, and other important biomolecules. Also exhibits THF-independent aldolase activity toward beta-hydroxyamino acids, producing glycine and aldehydes, via a retro-aldol mechanism. In Acetivibrio thermocellus (strain ATCC 27405 / DSM 1237 / JCM 9322 / NBRC 103400 / NCIMB 10682 / NRRL B-4536 / VPI 7372) (Clostridium thermocellum), this protein is Serine hydroxymethyltransferase.